We begin with the raw amino-acid sequence, 233 residues long: Small ribosomal subunit protein uS3 (233 aa).

One can recognise a KH type-2 domain in the interval 39–107; that stretch reads IRAFLKRKLY…DVNINIKEER (69 aa). A compositionally biased stretch (basic and acidic residues) spans 212-222; it reads MQPEKTEESAP. The disordered stretch occupies residues 212–233; it reads MQPEKTEESAPAKKSRRTRRGK. The segment covering 224–233 has biased composition (basic residues); it reads KKSRRTRRGK.

It belongs to the universal ribosomal protein uS3 family. Part of the 30S ribosomal subunit. Forms a tight complex with proteins S10 and S14.

In terms of biological role, binds the lower part of the 30S subunit head. Binds mRNA in the 70S ribosome, positioning it for translation. This Campylobacter jejuni subsp. doylei (strain ATCC BAA-1458 / RM4099 / 269.97) protein is Small ribosomal subunit protein uS3.